A 180-amino-acid polypeptide reads, in one-letter code: Large ribosomal subunit protein uL5 (180 aa).

It belongs to the universal ribosomal protein uL5 family. As to quaternary structure, part of the 50S ribosomal subunit; part of the 5S rRNA/L5/L18/L25 subcomplex. Contacts the 5S rRNA and the P site tRNA. Forms a bridge to the 30S subunit in the 70S ribosome.

Functionally, this is one of the proteins that bind and probably mediate the attachment of the 5S RNA into the large ribosomal subunit, where it forms part of the central protuberance. In the 70S ribosome it contacts protein S13 of the 30S subunit (bridge B1b), connecting the 2 subunits; this bridge is implicated in subunit movement. Contacts the P site tRNA; the 5S rRNA and some of its associated proteins might help stabilize positioning of ribosome-bound tRNAs. This is Large ribosomal subunit protein uL5 from Xanthomonas euvesicatoria pv. vesicatoria (strain 85-10) (Xanthomonas campestris pv. vesicatoria).